Reading from the N-terminus, the 294-residue chain is 33 kDa chaperonin (294 aa).

2 disulfides stabilise this stretch: Cys235–Cys237 and Cys268–Cys271.

Belongs to the HSP33 family. In terms of processing, under oxidizing conditions two disulfide bonds are formed involving the reactive cysteines. Under reducing conditions zinc is bound to the reactive cysteines and the protein is inactive.

The protein resides in the cytoplasm. Redox regulated molecular chaperone. Protects both thermally unfolding and oxidatively damaged proteins from irreversible aggregation. Plays an important role in the bacterial defense system toward oxidative stress. In Proteus mirabilis (strain HI4320), this protein is 33 kDa chaperonin.